The sequence spans 120 residues: NAD(P)H-quinone oxidoreductase subunit 3, chloroplastic (120 aa).

The next 3 membrane-spanning stretches (helical) occupy residues isoleucine 9–glycine 29, methionine 64–methionine 84, and valine 88–serine 108.

Belongs to the complex I subunit 3 family. As to quaternary structure, NDH is composed of at least 16 different subunits, 5 of which are encoded in the nucleus.

Its subcellular location is the plastid. The protein resides in the chloroplast thylakoid membrane. The enzyme catalyses a plastoquinone + NADH + (n+1) H(+)(in) = a plastoquinol + NAD(+) + n H(+)(out). It carries out the reaction a plastoquinone + NADPH + (n+1) H(+)(in) = a plastoquinol + NADP(+) + n H(+)(out). Its function is as follows. NDH shuttles electrons from NAD(P)H:plastoquinone, via FMN and iron-sulfur (Fe-S) centers, to quinones in the photosynthetic chain and possibly in a chloroplast respiratory chain. The immediate electron acceptor for the enzyme in this species is believed to be plastoquinone. Couples the redox reaction to proton translocation, and thus conserves the redox energy in a proton gradient. The polypeptide is NAD(P)H-quinone oxidoreductase subunit 3, chloroplastic (Illicium oligandrum (Star anise)).